Here is a 155-residue protein sequence, read N- to C-terminus: Protein-export protein SecB (155 aa).

It belongs to the SecB family. Homotetramer, a dimer of dimers. One homotetramer interacts with 1 SecA dimer.

It is found in the cytoplasm. In terms of biological role, one of the proteins required for the normal export of preproteins out of the cell cytoplasm. It is a molecular chaperone that binds to a subset of precursor proteins, maintaining them in a translocation-competent state. It also specifically binds to its receptor SecA. The chain is Protein-export protein SecB from Escherichia coli O139:H28 (strain E24377A / ETEC).